A 100-amino-acid polypeptide reads, in one-letter code: Small ribosomal subunit protein uS14c (100 aa).

Belongs to the universal ribosomal protein uS14 family. As to quaternary structure, part of the 30S ribosomal subunit.

It is found in the plastid. It localises to the chloroplast. Its function is as follows. Binds 16S rRNA, required for the assembly of 30S particles. The sequence is that of Small ribosomal subunit protein uS14c from Buxus microphylla (Littleleaf boxwood).